Here is a 749-residue protein sequence, read N- to C-terminus: uncharacterized protein (749 aa).

Disordered stretches follow at residues 1–58, 124–170, 200–291, and 385–405; these read MGTV…QPSN, DANA…PSPL, SRFS…PPVS, and YTWS…NPST. The span at 13–24 shows a compositional bias: low complexity; that stretch reads LNNGLSSNNGSS. 4 stretches are compositionally biased toward polar residues: residues 149 to 159, 238 to 252, 265 to 275, and 388 to 405; these read KSASKDSNAFN, ESKT…PSLN, LNYQNSSLNPS, and SRHS…NPST. One can recognise a PSP1 C-terminal domain in the interval 644–729; the sequence is KRILRKAQPH…YKTRIWMCAV (86 aa).

This is an uncharacterized protein from Schizosaccharomyces pombe (strain 972 / ATCC 24843) (Fission yeast).